The sequence spans 357 residues: Alanine racemase (357 aa).

Lysine 33 (proton acceptor; specific for D-alanine) is an active-site residue. The residue at position 33 (lysine 33) is an N6-(pyridoxal phosphate)lysine. Arginine 130 serves as a coordination point for substrate. Tyrosine 252 (proton acceptor; specific for L-alanine) is an active-site residue. Position 300 (methionine 300) interacts with substrate.

The protein belongs to the alanine racemase family. It depends on pyridoxal 5'-phosphate as a cofactor.

It carries out the reaction L-alanine = D-alanine. It participates in amino-acid biosynthesis; D-alanine biosynthesis; D-alanine from L-alanine: step 1/1. Catalyzes the interconversion of L-alanine and D-alanine. May also act on other amino acids. The sequence is that of Alanine racemase (alr) from Acidiphilium cryptum (strain JF-5).